Here is a 74-residue protein sequence, read N- to C-terminus: Molt-inhibiting hormone (74 aa).

A Pyrrolidone carboxylic acid modification is found at glutamine 1. Cystine bridges form between cysteine 7/cysteine 43, cysteine 23/cysteine 39, and cysteine 26/cysteine 52. Position 72 is a valine amide (valine 72).

It is found in the secreted. Inhibits Y-organs where molting hormone (ecdysteroid) is secreted. A molting cycle is initiated when MIH secretion diminishes or stops. The protein is Molt-inhibiting hormone of Procambarus bouvieri (Mexican crayfish).